The primary structure comprises 561 residues: Probable xyloglucan galactosyltransferase GT20 (561 aa).

The Cytoplasmic portion of the chain corresponds to 1–31 (MVSKRKSRTSKTIEDSCIHLCSVFFRFLYYT). The chain crosses the membrane as a helical; Signal-anchor for type II membrane protein span at residues 32–52 (LPALFLFFFLLYLCLSFTTGI). At 53 to 561 (SYNNFHMCIF…LLKKINRSVV (509 aa)) the chain is on the lumenal side. N-linked (GlcNAc...) asparagine glycosylation is found at Asn-87, Asn-253, Asn-277, Asn-418, Asn-421, and Asn-557.

The protein belongs to the glycosyltransferase 47 family. As to expression, expressed in hydathodes.

The protein resides in the golgi apparatus membrane. In terms of biological role, functions in xyloglucan synthesis by adding side chains to the xylosylated glucan backbone. Involved in the galactosylation of hemicellulose xyloglucan. The sequence is that of Probable xyloglucan galactosyltransferase GT20 from Arabidopsis thaliana (Mouse-ear cress).